The primary structure comprises 1144 residues: Adenylate cyclase type 3 (1144 aa).

The Cytoplasmic segment spans residues M1–L79. Helical transmembrane passes span V80 to F100, L105 to C125, V139 to F159, A173 to I193, and I226 to M246. D324, I325, and D368 together coordinate Mg(2+). Residues D324–T329 and L366–D368 contribute to the ATP site. A helical transmembrane segment spans residues E381–V401. Over R402–S630 the chain is Cytoplasmic. R412 provides a ligand contact to ATP. Residue K465 forms a Glycyl lysine isopeptide (Lys-Gly) (interchain with G-Cter in SUMO3) linkage. Positions Q504 to R563 are disordered. S523 is modified (phosphoserine). Over residues G534–S543 the composition is skewed to low complexity. S578 is modified (phosphoserine). 3 helical membrane passes run G631–I651, F662–P682, and W706–L726. N734 carries N-linked (GlcNAc...) asparagine glycosylation. 3 helical membrane-spanning segments follow: residues V755 to L775, L777 to F797, and L833 to F853. Residues Y854–P1144 are Cytoplasmic-facing. ATP-binding positions include K975, D1062–W1064, and N1069–R1073. Residue S1076 is modified to Phosphoserine; by CaMK2. Residue K1109 coordinates ATP.

Belongs to the adenylyl cyclase class-4/guanylyl cyclase family. Requires Mg(2+) as cofactor. It depends on Mn(2+) as a cofactor. N-glycosylated. In terms of processing, sumoylated. Sumoylation is required for targeting ot olfactory cilia. Post-translationally, rapidly phosphorylated after stimulation by odorants or forskolin. Phosphorylation by CaMK2 at Ser-1076 down-regulates enzyme activity. Detected on cilia on the olfactory epithelium (at protein level). Detected on cilia on the olfactory epithelium.

The protein resides in the cell membrane. Its subcellular location is the golgi apparatus. The protein localises to the cell projection. It is found in the cilium. It localises to the cytoplasm. The catalysed reaction is ATP = 3',5'-cyclic AMP + diphosphate. With respect to regulation, specifically activated by the G alpha protein GNAL/G(olf) in signaling cascades triggered by odorant receptors. Activated by forskolin. After forskolin treatment, activity is further increased by calcium/calmodulin. In the absence of forskolin, calcium/calmodulin has little effect on enzyme activity. Functionally, catalyzes the formation of the signaling molecule cAMP in response to G-protein signaling. Participates in signaling cascades triggered by odorant receptors via its function in cAMP biosynthesis: specifically activated by G alpha protein GNAL/G(olf) in olfactory epithelium. Required for the perception of odorants. Required for normal sperm motility and normal male fertility. Plays a role in regulating insulin levels and body fat accumulation in response to a high fat diet. This chain is Adenylate cyclase type 3, found in Rattus norvegicus (Rat).